A 310-amino-acid chain; its full sequence is Methionyl-tRNA formyltransferase (310 aa).

Ser-109–Pro-112 lines the (6S)-5,6,7,8-tetrahydrofolate pocket.

Belongs to the Fmt family.

The enzyme catalyses L-methionyl-tRNA(fMet) + (6R)-10-formyltetrahydrofolate = N-formyl-L-methionyl-tRNA(fMet) + (6S)-5,6,7,8-tetrahydrofolate + H(+). Attaches a formyl group to the free amino group of methionyl-tRNA(fMet). The formyl group appears to play a dual role in the initiator identity of N-formylmethionyl-tRNA by promoting its recognition by IF2 and preventing the misappropriation of this tRNA by the elongation apparatus. The polypeptide is Methionyl-tRNA formyltransferase (Alkaliphilus oremlandii (strain OhILAs) (Clostridium oremlandii (strain OhILAs))).